The primary structure comprises 308 residues: Homeobox-leucine zipper protein HOX2 (308 aa).

Disordered regions lie at residues 15-36 and 71-117; these read QGSL…SSPW and QGRA…RKKL. Low complexity predominate over residues 74 to 88; it reads ASTSPDSAAALSSAS. Residues 112 to 171 constitute a DNA-binding region (homeobox); it reads GGRKKLRLSKDQAAVLEECFKTHSTLNPKQKVALANRLGLRPRQVEVWFQNRRARTKLKQ. Positions 170-214 are leucine-zipper; sequence KQTEVDCEYLKRWCERLADENKRLEKELADLRALKAAPSPASASA.

It belongs to the HD-ZIP homeobox family. Class II subfamily. As to quaternary structure, homodimer. May form a heterodimer with HOX1, HOX3 or HOX7. In terms of tissue distribution, expressed in seedlings, roots, leaves, nodes, internodes, flowers and embryo.

It localises to the nucleus. Probable transcription factor that binds to the DNA sequence 5'-CAAT[GC]ATTG-3'. In Oryza sativa subsp. indica (Rice), this protein is Homeobox-leucine zipper protein HOX2 (HOX2).